A 772-amino-acid chain; its full sequence is Bromo adjacent homology domain-containing 1 protein (772 aa).

Disordered stretches follow at residues 1 to 63 and 77 to 117; these read MTHT…RSLV and LENV…PRKR. At Ser8 the chain carries Phosphoserine. A compositionally biased stretch (basic residues) spans 49–61; it reads TGRRKNYPLRKRS. 2 positions are modified to phosphoserine: Ser101 and Ser121. Disordered stretches follow at residues 131–357, 521–582, and 723–743; these read LLER…PADY, QTVA…RTNG, and PSRK…PHRT. 3 stretches are compositionally biased toward basic and acidic residues: residues 147–158, 170–182, and 189–199; these read RGGDPHRSRDRA, RLGD…RDLS, and EGARRDGDPAP. Phosphoserine is present on Ser182. Ser204 is subject to Phosphoserine. Residues 280-289 are compositionally biased toward pro residues; that stretch reads SAPPHGPPTQ. A compositionally biased stretch (low complexity) spans 299–310; sequence LENPLRPNLPLL. The segment covering 340-352 has biased composition (pro residues); the sequence is FPAPQLSPLPMPG. Polar residues predominate over residues 536–548; the sequence is GSKSGLRTGSSCR. Over residues 549–580 the composition is skewed to basic residues; the sequence is HTVRSKAARRPSHPKQPRAQRPRPRRRRRRRT. At Thr580 the chain carries Phosphothreonine. The region spanning 616–771 is the BAH domain; it reads ETIRVRDTVL…FRHGRILKNP (156 aa).

In terms of assembly, interacts with CBX5 (HP1 alpha), HDAC5, MBD1 and SP1. In terms of processing, ubiquitinated in a FBXO11-dependent manner; leading to degradation.

The protein localises to the nucleus. Its subcellular location is the chromosome. Functionally, heterochromatin protein that acts as a transcription repressor and has the ability to promote the formation of large heterochromatic domains. May act by recruiting heterochromatin proteins such as CBX5 (HP1 alpha), HDAC5 and MBD1. Represses IGF2 expression by binding to its CpG-rich P3 promoter and recruiting heterochromatin proteins. In Mus musculus (Mouse), this protein is Bromo adjacent homology domain-containing 1 protein (Bahd1).